A 1405-amino-acid polypeptide reads, in one-letter code: DNA-directed RNA polymerase subunit beta' (1405 aa).

Residues C70, C72, C85, and C88 each coordinate Zn(2+). Positions 460, 462, and 464 each coordinate Mg(2+). Zn(2+) is bound by residues C814, C888, C895, and C898.

Belongs to the RNA polymerase beta' chain family. As to quaternary structure, the RNAP catalytic core consists of 2 alpha, 1 beta, 1 beta' and 1 omega subunit. When a sigma factor is associated with the core the holoenzyme is formed, which can initiate transcription. Requires Mg(2+) as cofactor. The cofactor is Zn(2+).

The catalysed reaction is RNA(n) + a ribonucleoside 5'-triphosphate = RNA(n+1) + diphosphate. Its function is as follows. DNA-dependent RNA polymerase catalyzes the transcription of DNA into RNA using the four ribonucleoside triphosphates as substrates. This is DNA-directed RNA polymerase subunit beta' from Shewanella sp. (strain MR-7).